The sequence spans 473 residues: Cannabinoid receptor 1 (473 aa).

Residues Met1–Gln118 lie on the Extracellular side of the membrane. The required for mitochondrial localization stretch occupies residues Lys2–Val23. N-linked (GlcNAc...) asparagine glycans are attached at residues Asn79 and Asn85. Residues Leu119–Leu144 form a helical membrane-spanning segment. The Cytoplasmic segment spans residues His145–His156. Residues Phe157–Val177 form a helical membrane-spanning segment. Residues Asp178–Asn189 lie on the Extracellular side of the membrane. A helical membrane pass occupies residues Val190–Ile214. Residues Asp215–Lys234 are Cytoplasmic-facing. The chain crosses the membrane as a helical span at residues Ala235–Trp257. Residues Asn258 to Glu275 are Extracellular-facing. A helical membrane pass occupies residues Thr276 to Trp301. Residues Lys302–Thr346 lie on the Cytoplasmic side of the membrane. Residues Leu347 to Tyr367 form a helical membrane-spanning segment. Topologically, residues Asp368–Thr379 are extracellular. Residues Ile380–Leu401 traverse the membrane as a helical segment. The Cytoplasmic segment spans residues Arg402 to Leu473. The S-palmitoyl cysteine moiety is linked to residue Cys417.

This sequence belongs to the G-protein coupled receptor 1 family. Palmitoylation at Cys-417 is important for recruitment at both plasma membrane and lipid rafts and association with G protein alpha subunits.

It localises to the cell membrane. It is found in the mitochondrion outer membrane. The protein localises to the cell projection. Its subcellular location is the axon. The protein resides in the presynapse. G-protein coupled receptor for cannabinoids. Mediates many cannabinoid-induced effects in the central nervous system (CNS), as well as in peripheral tissues. Regulates cellular respiration and energy production in response to cannabinoids. Signaling typically involves reduction in cyclic AMP. In Taeniopygia guttata (Zebra finch), this protein is Cannabinoid receptor 1 (CNR1).